The primary structure comprises 471 residues: Glutamate--tRNA ligase 2 (471 aa).

Positions 15–25 (PSPTGYLHIGG) match the 'HIGH' region motif. The 'KMSKS' region motif lies at 243 to 247 (KLSKR). Lys246 contributes to the ATP binding site.

The protein belongs to the class-I aminoacyl-tRNA synthetase family. Glutamate--tRNA ligase type 1 subfamily. In terms of assembly, monomer.

The protein resides in the cytoplasm. The enzyme catalyses tRNA(Glu) + L-glutamate + ATP = L-glutamyl-tRNA(Glu) + AMP + diphosphate. Its function is as follows. Catalyzes the attachment of glutamate to tRNA(Glu) in a two-step reaction: glutamate is first activated by ATP to form Glu-AMP and then transferred to the acceptor end of tRNA(Glu). The polypeptide is Glutamate--tRNA ligase 2 (Cereibacter sphaeroides (strain ATCC 17025 / ATH 2.4.3) (Rhodobacter sphaeroides)).